The primary structure comprises 421 residues: Actin-related protein 6 (421 aa).

Belongs to the actin family. ARP6 subfamily. As to quaternary structure, component of the SWR1 chromatin-remodeling complex composed of at least ARP6/ESD1/SUF3, PIE1, SWC6, SWC2 and H2AZs (HTA8, HTA9, HTA11). Interacts directly with SWC6/SEF and PIE1. Also interacts with H2A.F/Z proteins. Mostly expressed in flowers, and, to a lower extent, in seedlings, shoot apex, stems, siliques, seeds, and roots (at protein level).

It localises to the nucleus. The protein localises to the cytoplasm. Functionally, component of the SWR1 complex which mediates the ATP-dependent exchange of histone H2A for the H2A variant H2A.F/Z leading to transcriptional regulation of selected genes (e.g. FLC) by chromatin remodeling. Binds to the promoter region of FLC chromatin. Required for the activation of FLC and FLC/MAF genes expression to levels that inhibit flowering, through both histone H3 and H4 acetylation and methylation mechanisms. Involved in several developmental processes including organization of plant organs, leaves formation, flowering time repression, and fertility. Modulates photoperiod-dependent epidermal leaves cell development; promotes cell division in long days, and cell expansion/division in short days. May be involved in the regulation of pathogenesis-related proteins (PRs). The protein is Actin-related protein 6 (ARP6) of Arabidopsis thaliana (Mouse-ear cress).